We begin with the raw amino-acid sequence, 64 residues long: Large ribosomal subunit protein bL33 (64 aa).

It belongs to the bacterial ribosomal protein bL33 family.

In Microcystis aeruginosa (strain NIES-843 / IAM M-2473), this protein is Large ribosomal subunit protein bL33.